The following is a 265-amino-acid chain: NAD kinase (265 aa).

The Proton acceptor role is filled by Asp45. NAD(+)-binding positions include 45-46 (DG), 122-123 (NE), Arg148, Asp150, 161-166 (TAYNKS), Ala185, and Gln223.

It belongs to the NAD kinase family. It depends on a divalent metal cation as a cofactor.

It localises to the cytoplasm. It catalyses the reaction NAD(+) + ATP = ADP + NADP(+) + H(+). Its function is as follows. Involved in the regulation of the intracellular balance of NAD and NADP, and is a key enzyme in the biosynthesis of NADP. Catalyzes specifically the phosphorylation on 2'-hydroxyl of the adenosine moiety of NAD to yield NADP. In Enterococcus faecalis (strain ATCC 700802 / V583), this protein is NAD kinase.